Here is a 131-residue protein sequence, read N- to C-terminus: Large ribosomal subunit protein bL12 (131 aa).

Belongs to the bacterial ribosomal protein bL12 family. In terms of assembly, homodimer. Part of the ribosomal stalk of the 50S ribosomal subunit. Forms a multimeric L10(L12)X complex, where L10 forms an elongated spine to which 2 to 4 L12 dimers bind in a sequential fashion. Binds GTP-bound translation factors.

Its function is as follows. Forms part of the ribosomal stalk which helps the ribosome interact with GTP-bound translation factors. Is thus essential for accurate translation. The polypeptide is Large ribosomal subunit protein bL12 (Prochlorococcus marinus (strain MIT 9215)).